Consider the following 392-residue polypeptide: MYQSIAMATNHGPSGYEGTGSFMHSATAATSPVYVPTTRVSSMIHSLPYLQTSGSSQQGSPVSGHNMWAQAGVESSAYNPGTSHPPVSPRFTFSSSPPITAPSSREVSYSSPLGISANGREQYSRGLGATYASPYPAYMSPDMGAAWTASPFDSSMLHNLQNRAVTSRHPNIEFFDDFSEGRECVNCGAMSTPLWRRDGTGHYLCNACGLYHKMNGINRPLIKPQRRLSASRRVGLSCANCHTTTTTLWRRNAEGEPVCNACGLYMKLHGVPRPLAMKKEGIQTRKRKPKNLSKSKTLTGQSGSDSLTPSTSSTNSMGEEMRPIKIEPGLSPPYDHSNSISQASALSTITSHGSSYYPMPSLKLSPQNHHSTFNPSPQANSKHDSWNNLVLA.

Residues 75–113 (SSAYNPGTSHPPVSPRFTFSSSPPITAPSSREVSYSSPL) form a disordered region. Residues 91–113 (FTFSSSPPITAPSSREVSYSSPL) are compositionally biased toward polar residues. GATA-type zinc fingers lie at residues 184-208 (CVNC…CNAC) and 238-262 (CANC…CNAC). Disordered regions lie at residues 279 to 339 (KEGI…HSNS) and 359 to 392 (MPSL…LVLA). A compositionally biased stretch (basic residues) spans 284-293 (TRKRKPKNLS). Over residues 302-316 (SGSDSLTPSTSSTNS) the composition is skewed to low complexity. Over residues 364 to 380 (LSPQNHHSTFNPSPQAN) the composition is skewed to polar residues.

In terms of tissue distribution, expressed at high levels in heart, small intestine, stomach, ovary, and liver. Found at much lower levels in lung, spleen, pancreas and skin.

The protein resides in the nucleus. Functionally, transcriptional activator that binds to the consensus sequence 5'-AGATAG-3'. Associated with cardiac specification and can regulate cardiac-specific transcription during embryogenesis. Activates the expression of cardiac MHC-alpha in vivo. This Xenopus laevis (African clawed frog) protein is Transcription factor GATA-4 (gata4).